Consider the following 294-residue polypeptide: NAD kinase (294 aa).

The active-site Proton acceptor is Asp-74. NAD(+)-binding positions include 74-75 (DG), 148-149 (NE), His-159, Arg-176, Asp-178, 189-194 (TAYSLS), and Gln-249.

Belongs to the NAD kinase family. Requires a divalent metal cation as cofactor.

It is found in the cytoplasm. The enzyme catalyses NAD(+) + ATP = ADP + NADP(+) + H(+). In terms of biological role, involved in the regulation of the intracellular balance of NAD and NADP, and is a key enzyme in the biosynthesis of NADP. Catalyzes specifically the phosphorylation on 2'-hydroxyl of the adenosine moiety of NAD to yield NADP. This is NAD kinase from Vibrio atlanticus (strain LGP32) (Vibrio splendidus (strain Mel32)).